The primary structure comprises 104 residues: Small ribosomal subunit protein uS10 (104 aa).

The protein belongs to the universal ribosomal protein uS10 family. In terms of assembly, part of the 30S ribosomal subunit.

Involved in the binding of tRNA to the ribosomes. The polypeptide is Small ribosomal subunit protein uS10 (Maricaulis maris (strain MCS10) (Caulobacter maris)).